The sequence spans 303 residues: MVSVNPRPKGFPVFDSSNMSLPSSDGFGSIPATGRTSTVSFSEDPTTKIRKPYTIKKSRENWTDQEHDKFLEALHLFDRDWKKIEAFVGSKTVVQIRSHAQKYFLKVQKSGANEHLPPPRPKRKASHPYPIKAPKNVAYTSLPSSSTLPLLEPGYLYSSDSKSLMGNQAVCASTSSSWNHESTNLPKPVIEVEEPGVSATAPLPNNRCRQEDTERVRAVTKPNNEESCEKPHRVMPNFAEVYSFIGSVFDPNTSGHLQRLKQMDPINMETVLLLMQNLSVNLTSPEFAEQRRLISSYSAKALK.

Residues 54 to 108 (TIKKSRENWTDQEHDKFLEALHLFDRDWKKIEAFVGSKTVVQIRSHAQKYFLKVQ) enclose the HTH myb-type domain. A DNA-binding region (H-T-H motif) is located at residues 81 to 104 (WKKIEAFVGSKTVVQIRSHAQKYF). The tract at residues 109–130 (KSGANEHLPPPRPKRKASHPYP) is disordered.

Its subcellular location is the nucleus. Probable transcription factor. The sequence is that of Protein REVEILLE 5 (RVE5) from Arabidopsis thaliana (Mouse-ear cress).